A 431-amino-acid chain; its full sequence is MADFKSLGLSKWLTESLRAMKITQPTAIQKACIPKILEGRDCIGGAKTGSGKTIAFAGPMLTKWSEDPSGMFGVVLTPTRELAMQIAEQFTALGSSMNIRVSVIVGGESIVQQALDLQRKPHFIIATPGRLAHHIMSSGDDTVGGLMRAKYLVLDEADILLTSTFADHLATCISALPPKDKRQTLLFTATITDQVKSLQNAPVQKGKPPLFAYQVESVDNVAIPSTLKIEYILVPEHVKEAYLYQLLTCEEYENKTAIIFVNRTMTAEILRRTLKQLEVRVASLHSQMPQQERTNSLHRFRANAARILIATDVASRGLDIPTVELVVNYDIPSDPDVFIHRSGRTARAGRIGDAISFVTQRDVSRIQAIEDRINKKMTETNKVHDTAVIRKALTKVTKAKRESLMAMQKENFGERKRQQKKKQNDGKSLRS.

The short motif at 2–30 (ADFKSLGLSKWLTESLRAMKITQPTAIQK) is the Q motif element. Residues 33–209 (IPKILEGRDC…NAPVQKGKPP (177 aa)) form the Helicase ATP-binding domain. 46–53 (AKTGSGKT) lines the ATP pocket. A DEAD box motif is present at residues 155–158 (DEAD). Residues 242 to 389 (YLYQLLTCEE…TNKVHDTAVI (148 aa)) form the Helicase C-terminal domain. Positions 404 to 431 (LMAMQKENFGERKRQQKKKQNDGKSLRS) are disordered. Positions 411–431 (NFGERKRQQKKKQNDGKSLRS) are enriched in basic and acidic residues.

The protein belongs to the DEAD box helicase family. DDX49/DBP8 subfamily. In terms of assembly, interacts with ESF2.

The protein resides in the nucleus. Its subcellular location is the nucleolus. The enzyme catalyses ATP + H2O = ADP + phosphate + H(+). In terms of biological role, ATP-binding RNA helicase involved in 40S ribosomal subunit biogenesis and is required for the normal formation of 18S rRNAs through pre-rRNA processing at A0, A1 and A2 sites. Required for vegetative growth. The sequence is that of ATP-dependent RNA helicase DBP8 (DBP8) from Saccharomyces cerevisiae (strain YJM789) (Baker's yeast).